We begin with the raw amino-acid sequence, 750 residues long: Catalase-peroxidase (750 aa).

Positions 112 to 235 (WHSAGTYRIG…LGAAHMGLIY (124 aa)) form a cross-link, tryptophyl-tyrosyl-methioninium (Trp-Tyr) (with M-261). The Proton acceptor role is filled by H113. Positions 235 to 261 (YVNPEGHNGNPDPVEAASYIRETFGRM) form a cross-link, tryptophyl-tyrosyl-methioninium (Tyr-Met) (with W-112). H276 lines the heme b pocket.

This sequence belongs to the peroxidase family. Peroxidase/catalase subfamily. As to quaternary structure, homodimer or homotetramer. Heme b serves as cofactor. In terms of processing, formation of the three residue Trp-Tyr-Met cross-link is important for the catalase, but not the peroxidase activity of the enzyme.

The enzyme catalyses H2O2 + AH2 = A + 2 H2O. It catalyses the reaction 2 H2O2 = O2 + 2 H2O. In terms of biological role, bifunctional enzyme with both catalase and broad-spectrum peroxidase activity. This chain is Catalase-peroxidase, found in Christiangramia forsetii (strain DSM 17595 / CGMCC 1.15422 / KT0803) (Gramella forsetii).